A 273-amino-acid chain; its full sequence is Cilia- and flagella-associated protein 298-B (273 aa).

This sequence belongs to the CFAP298 family.

The protein localises to the cytoplasm. It localises to the cytoskeleton. The protein resides in the cilium basal body. In terms of biological role, plays a role in motile cilium function, possibly by acting on outer dynein arm assembly. Seems to be important for initiation rather than maintenance of cilium motility. Required for correct positioning of the cilium at the apical cell surface, suggesting an additional role in the planar cell polarity (PCP) pathway. May suppress canonical Wnt signaling activity. In Xenopus laevis (African clawed frog), this protein is Cilia- and flagella-associated protein 298-B (cfap298-b).